The chain runs to 306 residues: Aspartate carbamoyltransferase catalytic subunit (306 aa).

2 residues coordinate carbamoyl phosphate: R55 and T56. K84 is a binding site for L-aspartate. Residues R105, H133, and Q136 each coordinate carbamoyl phosphate. L-aspartate-binding residues include R166 and R227. L265 and P266 together coordinate carbamoyl phosphate.

This sequence belongs to the aspartate/ornithine carbamoyltransferase superfamily. ATCase family. As to quaternary structure, heterododecamer (2C3:3R2) of six catalytic PyrB chains organized as two trimers (C3), and six regulatory PyrI chains organized as three dimers (R2).

The catalysed reaction is carbamoyl phosphate + L-aspartate = N-carbamoyl-L-aspartate + phosphate + H(+). The protein operates within pyrimidine metabolism; UMP biosynthesis via de novo pathway; (S)-dihydroorotate from bicarbonate: step 2/3. Its function is as follows. Catalyzes the condensation of carbamoyl phosphate and aspartate to form carbamoyl aspartate and inorganic phosphate, the committed step in the de novo pyrimidine nucleotide biosynthesis pathway. The polypeptide is Aspartate carbamoyltransferase catalytic subunit (Neisseria gonorrhoeae (strain NCCP11945)).